The primary structure comprises 329 residues: MKITVIGAGSWGTALALHFSQHGNRVSLWTRNADQVRQMQEARENKRGLPGFSFPETLEVCADLADALKDSGLVLIVTSVAGLRSSAELLKQYGAGHLPVLAACKGFEQDTGLLTFQVLKEVLPDNKKIGVLSGPSFAQELAKQLPCAVVLASENQEWIEELVPQLNTTVMRLYGSTDVIGVAVGGAVKNVMAIATGLSDGLEYGLNARAALVTRGLAEITRLASAMGAQPKTMMGLAGIGDLILTCTGALSRNRRVGLGLAEGKELHQVLVEIGHVSEGVSTIEEVFNTACKYQIDMPITQTLLQLIRKEMTPQQVVERLMERSARFE.

NADPH contacts are provided by S10, W11, R31, and K105. Sn-glycerol 3-phosphate-binding residues include K105, G134, and S136. Residue A138 participates in NADPH binding. Residues K189, D242, S252, R253, and N254 each contribute to the sn-glycerol 3-phosphate site. The Proton acceptor role is filled by K189. R253 provides a ligand contact to NADPH. Residues V277 and E279 each contribute to the NADPH site.

It belongs to the NAD-dependent glycerol-3-phosphate dehydrogenase family.

Its subcellular location is the cytoplasm. The enzyme catalyses sn-glycerol 3-phosphate + NAD(+) = dihydroxyacetone phosphate + NADH + H(+). The catalysed reaction is sn-glycerol 3-phosphate + NADP(+) = dihydroxyacetone phosphate + NADPH + H(+). The protein operates within membrane lipid metabolism; glycerophospholipid metabolism. Functionally, catalyzes the reduction of the glycolytic intermediate dihydroxyacetone phosphate (DHAP) to sn-glycerol 3-phosphate (G3P), the key precursor for phospholipid synthesis. In Neisseria meningitidis serogroup C (strain 053442), this protein is Glycerol-3-phosphate dehydrogenase [NAD(P)+].